The sequence spans 409 residues: 5-aminolevulinate synthase (409 aa).

Residues Arg21, Ser137, and Lys156 each contribute to the substrate site. The pyridoxal 5'-phosphate site is built by Ser189, His217, and Thr245. Lys248 is an active-site residue. N6-(pyridoxal phosphate)lysine is present on Lys248. The pyridoxal 5'-phosphate site is built by Thr277 and Thr278. Thr365 lines the substrate pocket.

It belongs to the class-II pyridoxal-phosphate-dependent aminotransferase family. In terms of assembly, homodimer. Pyridoxal 5'-phosphate serves as cofactor.

It catalyses the reaction succinyl-CoA + glycine + H(+) = 5-aminolevulinate + CO2 + CoA. The protein operates within porphyrin-containing compound metabolism; protoporphyrin-IX biosynthesis; 5-aminolevulinate from glycine: step 1/1. The protein is 5-aminolevulinate synthase (hemA) of Paracoccus denitrificans (strain Pd 1222).